The following is a 152-amino-acid chain: Ribosome maturation factor RimP (152 aa).

It belongs to the RimP family.

The protein resides in the cytoplasm. In terms of biological role, required for maturation of 30S ribosomal subunits. This is Ribosome maturation factor RimP from Brevibacillus brevis (strain 47 / JCM 6285 / NBRC 100599).